Here is a 401-residue protein sequence, read N- to C-terminus: Tumor necrosis factor receptor superfamily member 11B (401 aa).

The N-terminal stretch at 1-21 (MNKWLCCALLVLLDIIEWTTQ) is a signal peptide. TNFR-Cys repeat units lie at residues 24–62 (LPPK…KTLC), 65–105 (CPDH…NRVC), 107–142 (CEEG…NTVC), and 145–185 (CPDG…DNVC). 8 cysteine pairs are disulfide-bonded: cysteine 41/cysteine 54, cysteine 44/cysteine 62, cysteine 65/cysteine 80, cysteine 83/cysteine 97, cysteine 87/cysteine 105, cysteine 107/cysteine 118, cysteine 124/cysteine 142, and cysteine 145/cysteine 160. N-linked (GlcNAc...) asparagine glycosylation is present at asparagine 98. N-linked (GlcNAc...) asparagine glycosylation is found at asparagine 165 and asparagine 178. A disulfide bridge links cysteine 166 with cysteine 185. 2 consecutive Death domains span residues 198–269 (DVTL…MVKK) and 283–365 (RHLG…THSL). N-linked (GlcNAc...) asparagine glycosylation is present at asparagine 289.

As to quaternary structure, homodimer. Interacts with TNFSF10 and TNFSF11. As to expression, highly expressed in liver, lung, stomach, intestines and calvaria. Highly expressed in decidua and placenta, and in embryo.

Its subcellular location is the secreted. Its function is as follows. Acts as a decoy receptor for TNFSF11/RANKL and thereby neutralizes its function in osteoclastogenesis. Inhibits the activation of osteoclasts and promotes osteoclast apoptosis in vitro. Bone homeostasis seems to depend on the local ratio between TNFSF11 and TNFRSF11B. May also play a role in preventing arterial calcification. May act as decoy receptor for TNFSF10/TRAIL and protect against apoptosis. TNFSF10/TRAIL binding blocks the inhibition of osteoclastogenesis. In Mus musculus (Mouse), this protein is Tumor necrosis factor receptor superfamily member 11B (Tnfrsf11b).